Here is a 432-residue protein sequence, read N- to C-terminus: Tryptophan--tRNA ligase, cytoplasmic (432 aa).

Residues 111-120 (PSSDSMHLGH) carry the 'HIGH' region motif. A 'KMSKS' region motif is present at residues 295 to 299 (KMSAS).

Belongs to the class-I aminoacyl-tRNA synthetase family. Homodimer.

Its subcellular location is the cytoplasm. It catalyses the reaction tRNA(Trp) + L-tryptophan + ATP = L-tryptophyl-tRNA(Trp) + AMP + diphosphate + H(+). The polypeptide is Tryptophan--tRNA ligase, cytoplasmic (WRS1) (Saccharomyces cerevisiae (strain ATCC 204508 / S288c) (Baker's yeast)).